The sequence spans 309 residues: Protein FdhE homolog (309 aa).

Belongs to the FdhE family.

Its subcellular location is the cytoplasm. In terms of biological role, necessary for formate dehydrogenase activity. The protein is Protein FdhE homolog of Yersinia pestis bv. Antiqua (strain Antiqua).